Here is a 427-residue protein sequence, read N- to C-terminus: Succinate--CoA ligase [ADP-forming] subunit beta, mitochondrial (427 aa).

Residues methionine 1–histidine 30 constitute a mitochondrion transit peptide. The 246-residue stretch at alanine 39–lysine 284 folds into the ATP-grasp domain. ATP-binding positions include lysine 76 and glycine 83–glycine 85. Residue serine 102 is modified to Phosphoserine. Glutamate 144 is a binding site for ATP. Residues asparagine 236 and aspartate 253 each coordinate Mg(2+). Residues serine 263 and serine 276 each carry the phosphoserine modification. Residues asparagine 304 and glycine 361–valine 363 contribute to the substrate site.

It belongs to the succinate/malate CoA ligase beta subunit family. Heterodimer of an alpha and a beta subunit. Requires Mg(2+) as cofactor.

The protein localises to the mitochondrion. It carries out the reaction succinate + ATP + CoA = succinyl-CoA + ADP + phosphate. Its pathway is carbohydrate metabolism; tricarboxylic acid cycle; succinate from succinyl-CoA (ligase route): step 1/1. In terms of biological role, succinyl-CoA synthetase functions in the citric acid cycle (TCA), coupling the hydrolysis of succinyl-CoA to the synthesis of ATP and thus represents the only step of substrate-level phosphorylation in the TCA. The beta subunit provides nucleotide specificity of the enzyme and binds the substrate succinate, while the binding sites for coenzyme A and phosphate are found in the alpha subunit. This is Succinate--CoA ligase [ADP-forming] subunit beta, mitochondrial from Saccharomyces cerevisiae (strain ATCC 204508 / S288c) (Baker's yeast).